The sequence spans 239 residues: 1-(5-phosphoribosyl)-5-[(5-phosphoribosylamino)methylideneamino] imidazole-4-carboxamide isomerase (239 aa).

Aspartate 7 functions as the Proton acceptor in the catalytic mechanism. Aspartate 129 functions as the Proton donor in the catalytic mechanism.

This sequence belongs to the HisA/HisF family.

Its subcellular location is the cytoplasm. It catalyses the reaction 1-(5-phospho-beta-D-ribosyl)-5-[(5-phospho-beta-D-ribosylamino)methylideneamino]imidazole-4-carboxamide = 5-[(5-phospho-1-deoxy-D-ribulos-1-ylimino)methylamino]-1-(5-phospho-beta-D-ribosyl)imidazole-4-carboxamide. Its pathway is amino-acid biosynthesis; L-histidine biosynthesis; L-histidine from 5-phospho-alpha-D-ribose 1-diphosphate: step 4/9. This is 1-(5-phosphoribosyl)-5-[(5-phosphoribosylamino)methylideneamino] imidazole-4-carboxamide isomerase from Lactiplantibacillus plantarum (strain ATCC BAA-793 / NCIMB 8826 / WCFS1) (Lactobacillus plantarum).